The sequence spans 84 residues: Acyl carrier protein (84 aa).

The Carrier domain occupies 4–79 (NEIFEKVQDI…EVVDFIKSKL (76 aa)). Ser-39 bears the O-(pantetheine 4'-phosphoryl)serine mark.

Belongs to the acyl carrier protein (ACP) family. 4'-phosphopantetheine is transferred from CoA to a specific serine of apo-ACP by AcpS. This modification is essential for activity because fatty acids are bound in thioester linkage to the sulfhydryl of the prosthetic group.

It localises to the plastid. The protein localises to the chloroplast. It functions in the pathway lipid metabolism; fatty acid biosynthesis. Functionally, carrier of the growing fatty acid chain in fatty acid biosynthesis. The protein is Acyl carrier protein of Porphyra purpurea (Red seaweed).